The chain runs to 339 residues: MLQFILRRLGLVIPTFIGITLLTFAFVHMIPGDPVMIMAGERGISPERHAQLLAELGLDKPMWQQYLHYIWGVMHGDLGISMKSRIPVWEEFVPRFQATLELGVCAMIFATAVGIPVGVLAAVKRGSIFDHTAVGLALTGYSMPIFWWGMMLIMLVSVHWNLTPVSGRVSDMVFLDDSNPLTGFMLIDTAIWGEDGNFIDAVAHMILPAIVLGTIPLAVIVRMTRSSMLEVLGEDYIRTARAKGLTRMRVIIVHALRNAMLPVVTVIGLQVGTLLAGAILTETIFSWPGLGRWLIDALQRRDYPVVQGGVLLVATMIILVNLLVDLLYGVVNPRIRHKK.

Residues 1-9 are Periplasmic-facing; the sequence is MLQFILRRL. A helical membrane pass occupies residues 10–30; sequence GLVIPTFIGITLLTFAFVHMI. Topologically, residues 31–102 are cytoplasmic; sequence PGDPVMIMAG…VPRFQATLEL (72 aa). An ABC transmembrane type-1 domain is found at 96 to 328; sequence FQATLELGVC…LVNLLVDLLY (233 aa). A helical membrane pass occupies residues 103–123; that stretch reads GVCAMIFATAVGIPVGVLAAV. The Periplasmic segment spans residues 124-135; sequence KRGSIFDHTAVG. A helical transmembrane segment spans residues 136–156; sequence LALTGYSMPIFWWGMMLIMLV. Over 157-171 the chain is Cytoplasmic; that stretch reads SVHWNLTPVSGRVSD. The chain crosses the membrane as a helical span at residues 172–192; it reads MVFLDDSNPLTGFMLIDTAIW. Residues 193-200 are Periplasmic-facing; it reads GEDGNFID. Residues 201–221 form a helical membrane-spanning segment; it reads AVAHMILPAIVLGTIPLAVIV. Residues 222-259 lie on the Cytoplasmic side of the membrane; it reads RMTRSSMLEVLGEDYIRTARAKGLTRMRVIIVHALRNA. Residues 260-280 form a helical membrane-spanning segment; the sequence is MLPVVTVIGLQVGTLLAGAIL. Residues 281 to 309 are Periplasmic-facing; that stretch reads TETIFSWPGLGRWLIDALQRRDYPVVQGG. Residues 310–330 form a helical membrane-spanning segment; that stretch reads VLLVATMIILVNLLVDLLYGV. Topologically, residues 331–339 are cytoplasmic; it reads VNPRIRHKK.

The protein belongs to the binding-protein-dependent transport system permease family. OppBC subfamily. In terms of assembly, the complex is composed of two ATP-binding proteins (DppD and DppF), two transmembrane proteins (DppB and DppC) and a solute-binding protein (DppA).

The protein localises to the cell inner membrane. In terms of biological role, part of the ABC transporter DppABCDF involved in dipeptide transport. Responsible for the translocation of the substrate across the membrane. The polypeptide is Dipeptide transport system permease protein DppB (dppB) (Escherichia coli O157:H7).